Reading from the N-terminus, the 258-residue chain is Alcohol dehydrogenase 2 (258 aa).

9–33 (IFVGGLGFIGYEACKQLMAKNMASF) serves as a coordination point for NAD(+). A substrate-binding site is contributed by Ser-137. The Proton acceptor role is filled by Tyr-150.

This sequence belongs to the short-chain dehydrogenases/reductases (SDR) family. Homodimer.

The enzyme catalyses a primary alcohol + NAD(+) = an aldehyde + NADH + H(+). The catalysed reaction is a secondary alcohol + NAD(+) = a ketone + NADH + H(+). This chain is Alcohol dehydrogenase 2 (ADH2), found in Ceratitis capitata (Mediterranean fruit fly).